Reading from the N-terminus, the 214-residue chain is Glutathione S-transferase F12 (214 aa).

A GST N-terminal domain is found at 2–82; sequence VVKLYGQVTA…YYATKFADQG (81 aa). Glutathione contacts are provided by residues 11–12, 40–41, 53–54, and 66–67; these read AA, QK, QV, and ES. Positions 89 to 214 constitute a GST C-terminal domain; that stretch reads SLEHRAIVDQ…WKKLMVLAGH (126 aa).

Belongs to the GST superfamily. Phi family.

Its subcellular location is the cytoplasm. It localises to the cytosol. It carries out the reaction RX + glutathione = an S-substituted glutathione + a halide anion + H(+). In terms of biological role, involved in the transport and/or accumulation of both anthocyanins and proanthocyanidins (PA)s in the vacuole. Functions in the cytosol to maintain the regular accumulation in the vacuole of PA precursors, such as epicatechin and glycosylated epicatechin. The protein is Glutathione S-transferase F12 of Arabidopsis thaliana (Mouse-ear cress).